Here is a 575-residue protein sequence, read N- to C-terminus: Bifunctional decalin synthase calF (575 aa).

The first 18 residues, 1–18 (MSFKPLLLSLSLLSPALG), serve as a signal peptide directing secretion. Residues N46, N103, N127, N175, N268, N308, N359, N425, and N485 are each glycosylated (N-linked (GlcNAc...) asparagine). Residues 118–297 (LGNYASYSIN…LSMTTKVFQD (180 aa)) enclose the FAD-binding PCMH-type domain.

This sequence belongs to the oxygen-dependent FAD-linked oxidoreductase family.

Its pathway is secondary metabolite biosynthesis. In terms of biological role, bifunctional decaline synthase; part of the gene cluster that mediates the biosynthesis of calbistrin A and related compounds. Calbistrin A is a secondary metabolite with an interesting structure that was recently found to have bioactivity against leukemia cells. It consists of two polyketides linked by an ester bond: a bicyclic decalin containing polyketide and a linear 12 carbon dioic acid structure. The polyketide synthase calA is probably responsible for forming the decalin moiety. Because calA lacks a designated enoylreductase (ER) domain, the required activity is provided by the trans-enoyl reductase calK. Following release from the PKS, calF then probably catalyzes the oxidation and the subsequent Diels Alder cycloisomerization that lead to the formation of the decalin moiety. The decalin polyketide backbone includes two C-methyl groups, at C7 and C11 in backbone, of which the C7 position is probably methylated by the methyltransferase domain of calA. A candidate for adding the methyl group at C11, if not done by CalA, is the cluster methyltransferase calH. Several additional tailoring enzymes within the cluster could be involved in the modification of the decalin polyketide product. Those include the 3 cytochrome P450 monooxygenases CalE, CalG and CalL, of which one might be responsible for the introduction of the extra hydroxyl group attached to the backbone of the decalin moiety, at position C9 in the backbone, that allows for attachment of the linear moiety. One tailoring enzyme activity that is expected to be involved in biosynthesis of calbistrin is an acyltransferase for connecting the two polyketide synthase products, and which could be performed by the cluster acyltransferase calJ. The enzyme responsible for the biosynthesis of the linear moiety, probably a second PKS, has not been identified yet. The protein is Bifunctional decalin synthase calF of Penicillium decumbens.